Consider the following 189-residue polypeptide: NADH-quinone oxidoreductase subunit B (189 aa).

[4Fe-4S] cluster-binding residues include C39, C40, C104, and C135.

Belongs to the complex I 20 kDa subunit family. NDH-1 is composed of 14 different subunits. Subunits NuoB, C, D, E, F, and G constitute the peripheral sector of the complex. [4Fe-4S] cluster serves as cofactor.

It localises to the cell inner membrane. It carries out the reaction a quinone + NADH + 5 H(+)(in) = a quinol + NAD(+) + 4 H(+)(out). Its function is as follows. NDH-1 shuttles electrons from NADH, via FMN and iron-sulfur (Fe-S) centers, to quinones in the respiratory chain. The immediate electron acceptor for the enzyme in this species is believed to be a menaquinone. Couples the redox reaction to proton translocation (for every two electrons transferred, four hydrogen ions are translocated across the cytoplasmic membrane), and thus conserves the redox energy in a proton gradient. The sequence is that of NADH-quinone oxidoreductase subunit B from Chlorobium luteolum (strain DSM 273 / BCRC 81028 / 2530) (Pelodictyon luteolum).